We begin with the raw amino-acid sequence, 381 residues long: 1-deoxy-D-xylulose 5-phosphate reductoisomerase (381 aa).

Residues Thr-10, Gly-11, Ser-12, Ile-13, Asn-38, and Asn-121 each contribute to the NADPH site. A 1-deoxy-D-xylulose 5-phosphate-binding site is contributed by Lys-122. Residue Glu-123 participates in NADPH binding. Residue Asp-147 participates in Mn(2+) binding. 4 residues coordinate 1-deoxy-D-xylulose 5-phosphate: Ser-148, Glu-149, Ser-173, and His-196. Glu-149 serves as a coordination point for Mn(2+). An NADPH-binding site is contributed by Gly-202. 4 residues coordinate 1-deoxy-D-xylulose 5-phosphate: Ser-209, Asn-214, Lys-215, and Glu-218. A Mn(2+)-binding site is contributed by Glu-218.

Belongs to the DXR family. Mg(2+) serves as cofactor. Mn(2+) is required as a cofactor.

The enzyme catalyses 2-C-methyl-D-erythritol 4-phosphate + NADP(+) = 1-deoxy-D-xylulose 5-phosphate + NADPH + H(+). It functions in the pathway isoprenoid biosynthesis; isopentenyl diphosphate biosynthesis via DXP pathway; isopentenyl diphosphate from 1-deoxy-D-xylulose 5-phosphate: step 1/6. In terms of biological role, catalyzes the NADPH-dependent rearrangement and reduction of 1-deoxy-D-xylulose-5-phosphate (DXP) to 2-C-methyl-D-erythritol 4-phosphate (MEP). The protein is 1-deoxy-D-xylulose 5-phosphate reductoisomerase of Alkaliphilus oremlandii (strain OhILAs) (Clostridium oremlandii (strain OhILAs)).